We begin with the raw amino-acid sequence, 186 residues long: ATP synthase subunit delta (186 aa).

The protein belongs to the ATPase delta chain family. In terms of assembly, F-type ATPases have 2 components, F(1) - the catalytic core - and F(0) - the membrane proton channel. F(1) has five subunits: alpha(3), beta(3), gamma(1), delta(1), epsilon(1). CF(0) has four main subunits: a(1), b(1), b'(1) and c(10-14). The alpha and beta chains form an alternating ring which encloses part of the gamma chain. F(1) is attached to F(0) by a central stalk formed by the gamma and epsilon chains, while a peripheral stalk is formed by the delta, b and b' chains.

The protein localises to the cell inner membrane. Its function is as follows. F(1)F(0) ATP synthase produces ATP from ADP in the presence of a proton or sodium gradient. F-type ATPases consist of two structural domains, F(1) containing the extramembraneous catalytic core and F(0) containing the membrane proton channel, linked together by a central stalk and a peripheral stalk. During catalysis, ATP synthesis in the catalytic domain of F(1) is coupled via a rotary mechanism of the central stalk subunits to proton translocation. Functionally, this protein is part of the stalk that links CF(0) to CF(1). It either transmits conformational changes from CF(0) to CF(1) or is implicated in proton conduction. This chain is ATP synthase subunit delta, found in Rhodopseudomonas palustris (strain BisB5).